The primary structure comprises 464 residues: Anthocyanidin 3-O-galactosyltransferase 3GT1 (464 aa).

Residues S19 and H21 each coordinate an anthocyanidin. Residue H21 is the Proton acceptor of the active site. An N-linked (GlcNAc...) asparagine glycan is attached at N38. The active-site Charge relay is D121. H152 contributes to the an anthocyanidin binding site. Positions 342, 344, 359, 362, 363, 364, and 367 each coordinate UDP-alpha-D-glucose. Residue G382 participates in an anthocyanidin binding. D383 is a UDP-alpha-D-glucose binding site.

It belongs to the UDP-glycosyltransferase family. As to quaternary structure, monomer. As to expression, mostly expressed in leaves and flowers and, to a lower extent, in roots. In flowers, mainly observed in petals, toruses and scapes, and at lower levels in pistils and stamens.

The catalysed reaction is cyanidin + UDP-alpha-D-galactose = cyanidin 3-O-beta-D-galactoside + UDP + H(+). It catalyses the reaction cyanidin + UDP-alpha-D-glucose = cyanidin 3-O-beta-D-glucoside + UDP + H(+). The enzyme catalyses delphinidin + UDP-alpha-D-glucose = delphinidin 3-O-beta-D-glucoside + UDP. It carries out the reaction malvidin + UDP-alpha-D-glucose = malvidin 3-O-beta-D-glucoside + UDP. The catalysed reaction is delphinidin + UDP-alpha-D-galactose = delphinidin 3-O-beta-D-galactoside + UDP + H(+). It catalyses the reaction pelargonidin + UDP-alpha-D-galactose = pelargonidin 3-O-beta-D-galactoside betaine + UDP. The enzyme catalyses peonidin + UDP-alpha-D-galactose = peonidin 3-O-beta-D-galactoside + UDP. It carries out the reaction malvidin + UDP-alpha-D-galactose = malvidin 3-O-beta-D-galactoside + UDP + H(+). The catalysed reaction is petunidin + UDP-alpha-D-galactose = petunidin 3-O-beta-D-galactoside + UDP. It catalyses the reaction an anthocyanidin + UDP-alpha-D-glucose + H(+) = an anthocyanidin 3-O-beta-D-glucoside + UDP. The enzyme catalyses an anthocyanidin + UDP-alpha-D-galactose = an anthocyanidin 3-O-beta-D-galactoside + UDP. The protein operates within pigment biosynthesis; anthocyanin biosynthesis. Flavonoid 3-O-glycosyltransferase involved in the biosynthesis of anthocyanins conferring flower red/pink colors, mainly anthocyanidin 3-O-glycosides. Catalyzes the addition of UDP-sugar to the 3-OH of anthocyanidin, with a preference for UDP-galactose (UDP-Gal) as sugar donor and cyanidin as substrate; able to use delphinidin, pelargonidin, peonidin, malvidin and petunidin as substrates in the presence of UDP-Gal. Can also use UDP-glucose (UDP-Glu) as sugar donor with delphinidin, cyanidin and malvidin as substrates, but not active on pelargonidin, peonidin and petunidin. The polypeptide is Anthocyanidin 3-O-galactosyltransferase 3GT1 (Rhododendron delavayi (Rhododendron)).